Consider the following 146-residue polypeptide: Late protein H7 (146 aa).

Residues 10-32 traverse the membrane as a helical segment; the sequence is LAMTAFFGELNTLDIMALIMSIF.

Belongs to the chordopoxvirinae H7 family.

It is found in the membrane. Its function is as follows. Contributes to the formation of crescents and immature virions (IV). The chain is Late protein H7 from Vaccinia virus (strain Tian Tan) (VACV).